Here is a 49-residue protein sequence, read N- to C-terminus: U3-plectoxin-Pt1a (49 aa).

Intrachain disulfides connect Cys2/Cys16, Cys9/Cys30, Cys15/Cys41, Cys32/Cys39, and Cys45/Cys49.

As to expression, expressed by the venom gland.

It localises to the secreted. Functionally, potent toxin that may paralyze and/or kill insect pests such as H.virescens (lepidoptera), S.exigua (beet armyworm) and M.sexta (tobacco hornworm). In Plectreurys tristis (Spider), this protein is U3-plectoxin-Pt1a.